The chain runs to 458 residues: Zinc finger protein 239 (458 aa).

Lys108 is covalently cross-linked (Glycyl lysine isopeptide (Lys-Gly) (interchain with G-Cter in SUMO2)). Ser191 carries the phosphoserine modification. C2H2-type zinc fingers lie at residues 207–229 (YECS…QRDH), 235–257 (YKCE…QAVH), 263–285 (YKCD…HAVH), 291–313 (YKCD…QRVH), 319–341 (YECE…QRVH), 347–369 (YKCG…RCIH), 375–397 (YQCY…LRVH), 403–425 (YHCG…QRVH), and 431–453 (YECS…QRVH).

This sequence belongs to the krueppel C2H2-type zinc-finger protein family.

The protein localises to the nucleus. Its function is as follows. May be involved in transcriptional regulation. The polypeptide is Zinc finger protein 239 (ZNF239) (Pongo abelii (Sumatran orangutan)).